The chain runs to 510 residues: Histidine ammonia-lyase (510 aa).

The 5-imidazolinone (Ala-Gly) cross-link spans 143–145 (ASG). Serine 144 carries the post-translational modification 2,3-didehydroalanine (Ser).

This sequence belongs to the PAL/histidase family. In terms of processing, contains an active site 4-methylidene-imidazol-5-one (MIO), which is formed autocatalytically by cyclization and dehydration of residues Ala-Ser-Gly.

It is found in the cytoplasm. It catalyses the reaction L-histidine = trans-urocanate + NH4(+). It functions in the pathway amino-acid degradation; L-histidine degradation into L-glutamate; N-formimidoyl-L-glutamate from L-histidine: step 1/3. This is Histidine ammonia-lyase from Aliivibrio fischeri (strain MJ11) (Vibrio fischeri).